Consider the following 556-residue polypeptide: MSSPTADVEKLRRIIEVARGDRRADFVVKNAQIVDLVNEEIFEGDIAVAEGFIAGIGSYSGVEECEASNLVAVPGLIDAHTHIEMSMLTVSEFARLVVPRGTTGVVADPHEIANVLGKDGVMLMLEEARSTPLRFYCMVPSCVPSSPLETSGARIGVEEIRELLEEEEVLGLAEMMNFPGVVSADREVLEKIVLAGIVDGHAPGLRGKKLNAYIAAGASSDHETTSFEEGKEKLRLGMWVMIREGSAARNLVALKGLTGNRHTMLVTDGDRSVKDIIEEGYLDHVFRRAIEEGIDEIKALQMLTLNPAEYFGINAGLIAPSRLADIVLLKNLRKFEVRDVFVGGRRPEFKRFNHPEWAKKTVKARKITPESIQLKTGRVRVIEVYDGEIVTGEAIEEVQGVDVERDILKAVVVERHIRSGRVGKAYVRGFGLKRGAIAQSIAHDAHNIVCVGVDDGSICAAVNRVIELQGGIVVADAEVRAELPLPIAGIMSDERAERVLERLSEIEEEVRKLGCRLKSPVITLSFIALPVIPKLKLTDLGLVDVEAFRVVDLQAD.

Belongs to the metallo-dependent hydrolases superfamily. Adenine deaminase family. The cofactor is Mn(2+).

The enzyme catalyses adenine + H2O + H(+) = hypoxanthine + NH4(+). The sequence is that of Adenine deaminase from Archaeoglobus fulgidus (strain ATCC 49558 / DSM 4304 / JCM 9628 / NBRC 100126 / VC-16).